Reading from the N-terminus, the 509-residue chain is MTVTYTARVANARFGGFSQLLLLWRGSIYKLLWRELLCFLGFYMALSAAYRFVLTEGQKRYFEKLVIYCDQYASLIPVSFVLGFYVTLVVNRWWSQYLCMPLPDALMCVVAGTVHGRDDRGRLYRRTLMRYAGLSAVLILRSVSTAVFKRFPTIDHVVEAGFMTREERKKFENLNSSYNKYWVPCVWFSNLAAQARREGRIRDNSALKLLLEELNVFRGKCGMLFHYDWISVPLVYTQVVTIALYSYFLACLIGRQFLDPAQGYKDHDLDLCVPIFTLLQFFFYAGWLKVAEQLINPFGEDDDDFETNFLIDRNFQVSMLAVDEMYDDLAVLEKDLYWDAAEARAPYTAATVFQLRQPSFQGSTFDITLAKEDMQFQRLDGLDGPMGEAPGDFLQRLLPAGAGMVAGGPLGRRLSFLLRKNSCVSEASTGASCSCAVVPEGAAPECSCGDPLLDPGLPEPEAPPPAGPEPLTLIPGPVEPFSIVTMPGPRGPAPPWLPSPIGEEEENLA.

At 1–31 (MTVTYTARVANARFGGFSQLLLLWRGSIYKL) the chain is on the cytoplasmic side. A Ca(2+)-binding site is contributed by Ala10. Residues 32-51 (LWRELLCFLGFYMALSAAYR) traverse the membrane as a helical segment. Residues 52 to 60 (FVLTEGQKR) lie on the Extracellular side of the membrane. The chain crosses the membrane as a helical span at residues 61–82 (YFEKLVIYCDQYASLIPVSFVL). At 83 to 238 (GFYVTLVVNR…WISVPLVYTQ (156 aa)) the chain is on the cytoplasmic side. Residues 239–255 (VVTIALYSYFLACLIGR) traverse the membrane as a helical segment. The Extracellular segment spans residues 256–274 (QFLDPAQGYKDHDLDLCVP). The helical transmembrane segment at 275 to 288 (IFTLLQFFFYAGWL) threads the bilayer. The Cytoplasmic segment spans residues 289–509 (KVAEQLINPF…PIGEEEENLA (221 aa)). Residues Gln293, Asn296, Asp301, and Asp304 each coordinate Ca(2+). Residues 454–509 (DPGLPEPEAPPPAGPEPLTLIPGPVEPFSIVTMPGPRGPAPPWLPSPIGEEEENLA) form a disordered region. Composition is skewed to pro residues over residues 457–468 (LPEPEAPPPAGP) and 489–498 (PRGPAPPWLP).

It belongs to the anion channel-forming bestrophin (TC 1.A.46) family. Calcium-sensitive chloride channel subfamily. As to quaternary structure, pentamer. Interacts with GLUL; this interaction tethers a fraction of GLUL to the membrane, causing a decrease of cytosolic glutamine synthase (GS) activity and inhibits the chloride channel activity of BEST2 by affecting the gating at the aperture in the absence of intracellular glutamate. Mainly confined to the retinal pigment epithelium. Expressed in colon.

The protein localises to the cell membrane. Its subcellular location is the basolateral cell membrane. It catalyses the reaction chloride(in) = chloride(out). It carries out the reaction hydrogencarbonate(in) = hydrogencarbonate(out). The enzyme catalyses L-glutamate(out) = L-glutamate(in). The catalysed reaction is iodide(out) = iodide(in). It catalyses the reaction L-glutamine(out) = L-glutamine(in). Its activity is regulated as follows. Chloride channel activity is allosterically inhibited by GLUL/glutamine synthase (GS) which affects the gating at the aperture in the absence of intracellular glutamate. Inhibitory effect of GLUL is relieved upon increasing of L-glutamate intracellular level. Ligand-gated anion channel that allows the movement of anions across cell membranes when activated by calcium (Ca2+). Transports a large specter of anions, namely mediates the movement of chloride, L-glutamate and iodide. Calcium-binding triggers the dilation of the aperture, but calcium-dependent gating is only effective when the size of the passing anion is bigger than the closed aperture. Mediates the calcium-activated hydrogencarbonate movement and participates in colonic hydrogencarbonate secretion concomitant with mucin secretion. In non-pigmented epithelium (NPE), mediates the efflux of intracellular L-glutamate; binding of intracellular L-glutamate activates and open both the neck and the aperture of the channel, leading to L-glutamate exit promoting chloride influx movement from the extracellular side in trans. Also exhibits a directional permeability for intracellular glutamine, in a similar manner as for L-glutamate. In Homo sapiens (Human), this protein is Bestrophin-2a.